We begin with the raw amino-acid sequence, 201 residues long: Small ribosomal subunit protein uS4 (201 aa).

Positions 93-155 constitute an S4 RNA-binding domain; that stretch reads CRLDNIVYRM…SKSLSMFEVN (63 aa).

It belongs to the universal ribosomal protein uS4 family. As to quaternary structure, part of the 30S ribosomal subunit. Contacts protein S5. The interaction surface between S4 and S5 is involved in control of translational fidelity.

In terms of biological role, one of the primary rRNA binding proteins, it binds directly to 16S rRNA where it nucleates assembly of the body of the 30S subunit. With S5 and S12 plays an important role in translational accuracy. The sequence is that of Small ribosomal subunit protein uS4 from Elusimicrobium minutum (strain Pei191).